Here is a 478-residue protein sequence, read N- to C-terminus: Cysteine--tRNA ligase (478 aa).

A Zn(2+)-binding site is contributed by C29. A 'HIGH' region motif is present at residues 31–41 (VTVYDYCHLGH). Zn(2+) contacts are provided by C213, H238, and E242. The 'KMSKS' region signature appears at 270-274 (KMSKS). K273 contributes to the ATP binding site.

Belongs to the class-I aminoacyl-tRNA synthetase family. In terms of assembly, monomer. Zn(2+) is required as a cofactor.

Its subcellular location is the cytoplasm. It carries out the reaction tRNA(Cys) + L-cysteine + ATP = L-cysteinyl-tRNA(Cys) + AMP + diphosphate. The polypeptide is Cysteine--tRNA ligase (Synechococcus sp. (strain ATCC 27144 / PCC 6301 / SAUG 1402/1) (Anacystis nidulans)).